We begin with the raw amino-acid sequence, 468 residues long: MELHRCSLLALLLAVTCSVAVAYDPLDPKGNITIKWDVISWTPDGYVAMVTMSNYQMYRQILAPGWTVGWSWAKKEVIWSIVGAQATEQGDCSKFKGGIPHSCKRTPAIVDLLPGVPYNQQIANCCKAGVVSAYGQDPAGSVSAFQVSVGLAGTTNKTVKLPTNFTLAGPGPGYTCGPATIVPSTVYLTPDRRRRTQALMTWTVTCTYSQQLASRYPTCCVSFSSFYNSTIVPCARCACGCGHDGYRGNGGGGKNARAGDGRSRRNSGGGGGHSGGTECIMGDSKRALSAGVNTPRKDGAPLLQCTSHMCPIRVHWHVKLNYKDYWRAKIAITNFNYRMNYTQWTLVAQHPNLNNVTEVFSFQYKPLLPYGNINDTGMFYGLKFYNDLLMEAGPFGNVQSEVLMRKDYNTFTFSQGWAFPRKIYFNGDECKMPPPDSYPYLPNSAPIGPPRSVAAAASAILVVLLLVA.

The signal sequence occupies residues 1 to 22 (MELHRCSLLALLLAVTCSVAVA). N-linked (GlcNAc...) asparagine glycosylation is found at asparagine 31, asparagine 156, asparagine 164, and asparagine 228. The disordered stretch occupies residues 251–278 (GGGKNARAGDGRSRRNSGGGGGHSGGTE). Asparagine 340, asparagine 355, and asparagine 374 each carry an N-linked (GlcNAc...) asparagine glycan. Asparagine 443 carries GPI-anchor amidated asparagine lipidation. Residues 444 to 468 (SAPIGPPRSVAAAASAILVVLLLVA) constitute a propeptide, removed in mature form.

It belongs to the COBRA family. As to expression, expressed mainly in developing sclerenchyma cells and in vascular bundles.

It localises to the cell membrane. Involved in determining the orientation of cell expansion, probably by playing an important role in cellulose deposition. May act by recruiting cellulose synthesizing complexes to discrete positions on the cell surface. This Oryza sativa subsp. indica (Rice) protein is COBRA-like protein 5 (BC1).